Here is a 448-residue protein sequence, read N- to C-terminus: Squalene synthase ERG9 (448 aa).

The helical transmembrane segment at 428–448 threads the bilayer; the sequence is CNVVLFGIGALILSLIYFVLY.

This sequence belongs to the phytoene/squalene synthase family. Mg(2+) serves as cofactor.

The protein localises to the endoplasmic reticulum membrane. The protein resides in the microsome. It carries out the reaction 2 (2E,6E)-farnesyl diphosphate + NADPH + H(+) = squalene + 2 diphosphate + NADP(+). The catalysed reaction is 2 (2E,6E)-farnesyl diphosphate + NADH + H(+) = squalene + 2 diphosphate + NAD(+). It participates in terpene metabolism; lanosterol biosynthesis; lanosterol from farnesyl diphosphate: step 1/3. Its function is as follows. Squalene synthase; part of the third module of ergosterol biosynthesis pathway that includes the late steps of the pathway. ERG9 produces squalene from 2 farnesyl pyrophosphate moieties. The third module or late pathway involves the ergosterol synthesis itself through consecutive reactions that mainly occur in the endoplasmic reticulum (ER) membrane. Firstly, the squalene synthase ERG9 catalyzes the condensation of 2 farnesyl pyrophosphate moieties to form squalene, which is the precursor of all steroids. Squalene synthase is crucial for balancing the incorporation of farnesyl diphosphate (FPP) into sterol and nonsterol isoprene synthesis. Secondly, the squalene epoxidase ERG1 catalyzes the stereospecific oxidation of squalene to (S)-2,3-epoxysqualene, which is considered to be a rate-limiting enzyme in steroid biosynthesis. Then, the lanosterol synthase ERG7 catalyzes the cyclization of (S)-2,3 oxidosqualene to lanosterol, a reaction that forms the sterol core. In the next steps, lanosterol is transformed to zymosterol through a complex process involving various demethylation, reduction and desaturation reactions. The lanosterol 14-alpha-demethylase ERG11 (also known as CYP51) catalyzes C14-demethylation of lanosterol to produce 4,4'-dimethyl cholesta-8,14,24-triene-3-beta-ol, which is critical for ergosterol biosynthesis. The C-14 reductase ERG24 reduces the C14=C15 double bond of 4,4-dimethyl-cholesta-8,14,24-trienol to produce 4,4-dimethyl-cholesta-8,24-dienol. 4,4-dimethyl-cholesta-8,24-dienol is substrate of the C-4 demethylation complex ERG25-ERG26-ERG27 in which ERG25 catalyzes the three-step monooxygenation required for the demethylation of 4,4-dimethyl and 4alpha-methylsterols, ERG26 catalyzes the oxidative decarboxylation that results in a reduction of the 3-beta-hydroxy group at the C-3 carbon to an oxo group, and ERG27 is responsible for the reduction of the keto group on the C-3. ERG28 has a role as a scaffold to help anchor ERG25, ERG26 and ERG27 to the endoplasmic reticulum and ERG29 regulates the activity of the iron-containing C4-methylsterol oxidase ERG25. Then, the sterol 24-C-methyltransferase ERG6 catalyzes the methyl transfer from S-adenosyl-methionine to the C-24 of zymosterol to form fecosterol. The C-8 sterol isomerase ERG2 catalyzes the reaction which results in unsaturation at C-7 in the B ring of sterols and thus converts fecosterol to episterol. The sterol-C5-desaturase ERG3 then catalyzes the introduction of a C-5 double bond in the B ring to produce 5-dehydroepisterol. The C-22 sterol desaturase ERG5 further converts 5-dehydroepisterol into ergosta-5,7,22,24(28)-tetraen-3beta-ol by forming the C-22(23) double bond in the sterol side chain. Finally, ergosta-5,7,22,24(28)-tetraen-3beta-ol is substrate of the C-24(28) sterol reductase ERG4 to produce ergosterol. This Candida albicans (strain SC5314 / ATCC MYA-2876) (Yeast) protein is Squalene synthase ERG9.